A 236-amino-acid polypeptide reads, in one-letter code: MKAGNGFTFKRFHINHDRCAMKVGTDGILLGAWADLANSRSILDLGTGSGLIALMLAQRSDEDVQIHGVERDPAAARQAQENFRASPWAHRLYLHFGDIADFAQKCGQKFDNIVANPPYFAQGVDCRNHARNAARYTAALSHAQWLEIASSLLTEQGTIHFVLPAEQGKTLKQSTALYCVRQCDVISKQGKAAQRVLLSFMKEKKETAYSELTIYDEKNRYTLEFIQLTREFYLKF.

It belongs to the methyltransferase superfamily. tRNA (adenine-N(6)-)-methyltransferase family.

Its subcellular location is the cytoplasm. The catalysed reaction is adenosine(37) in tRNA1(Val) + S-adenosyl-L-methionine = N(6)-methyladenosine(37) in tRNA1(Val) + S-adenosyl-L-homocysteine + H(+). In terms of biological role, specifically methylates the adenine in position 37 of tRNA(1)(Val) (anticodon cmo5UAC). This is tRNA1(Val) (adenine(37)-N6)-methyltransferase from Actinobacillus succinogenes (strain ATCC 55618 / DSM 22257 / CCUG 43843 / 130Z).